The primary structure comprises 130 residues: Sec-independent protein translocase protein TatB (130 aa).

Residues 1–21 (MFDIGFWELVLIFVVGLVVLG) form a helical membrane-spanning segment. Residues 85–130 (LKQAAQSVNRPYADVSAKNEATSSSSSDATHQTEATKTSAANTKSE) are disordered. The segment covering 112-130 (DATHQTEATKTSAANTKSE) has biased composition (polar residues).

It belongs to the TatB family. In terms of assembly, the Tat system comprises two distinct complexes: a TatABC complex, containing multiple copies of TatA, TatB and TatC subunits, and a separate TatA complex, containing only TatA subunits. Substrates initially bind to the TatABC complex, which probably triggers association of the separate TatA complex to form the active translocon.

The protein resides in the cell inner membrane. In terms of biological role, part of the twin-arginine translocation (Tat) system that transports large folded proteins containing a characteristic twin-arginine motif in their signal peptide across membranes. Together with TatC, TatB is part of a receptor directly interacting with Tat signal peptides. TatB may form an oligomeric binding site that transiently accommodates folded Tat precursor proteins before their translocation. This is Sec-independent protein translocase protein TatB from Vibrio vulnificus (strain CMCP6).